The following is a 352-amino-acid chain: Isoflavone-7-O-methyltransferase 9 (352 aa).

118-127 (VLDPTLSGSY) provides a ligand contact to substrate. S-adenosyl-L-methionine-binding residues include G196, D219, D239, M240, and K253. H257 functions as the Proton acceptor in the catalytic mechanism.

This sequence belongs to the class I-like SAM-binding methyltransferase superfamily. Cation-independent O-methyltransferase family. COMT subfamily. Homodimer.

The enzyme catalyses a 7-hydroxyisoflavone + S-adenosyl-L-methionine = a 7-methoxyisoflavone + S-adenosyl-L-homocysteine + H(+). The protein operates within phytoalexin biosynthesis; medicarpin biosynthesis. Transfers a methyl group to 7-hydroxyls of the isoflavones daidzein, genistein and 6,7,4'-trihydroxyisoflavone. Can also methylate (+)6a-hydroxymaackiain with lower efficiency. This is Isoflavone-7-O-methyltransferase 9 from Medicago sativa (Alfalfa).